The following is a 357-amino-acid chain: Nicotinate-nucleotide--dimethylbenzimidazole phosphoribosyltransferase (357 aa).

Residue E323 is the Proton acceptor of the active site.

Belongs to the CobT family.

It carries out the reaction 5,6-dimethylbenzimidazole + nicotinate beta-D-ribonucleotide = alpha-ribazole 5'-phosphate + nicotinate + H(+). It functions in the pathway nucleoside biosynthesis; alpha-ribazole biosynthesis; alpha-ribazole from 5,6-dimethylbenzimidazole: step 1/2. In terms of biological role, catalyzes the synthesis of alpha-ribazole-5'-phosphate from nicotinate mononucleotide (NAMN) and 5,6-dimethylbenzimidazole (DMB). In Nitratidesulfovibrio vulgaris (strain ATCC 29579 / DSM 644 / CCUG 34227 / NCIMB 8303 / VKM B-1760 / Hildenborough) (Desulfovibrio vulgaris), this protein is Nicotinate-nucleotide--dimethylbenzimidazole phosphoribosyltransferase.